We begin with the raw amino-acid sequence, 117 residues long: Large ribosomal subunit protein bL20 (117 aa).

It belongs to the bacterial ribosomal protein bL20 family.

Functionally, binds directly to 23S ribosomal RNA and is necessary for the in vitro assembly process of the 50S ribosomal subunit. It is not involved in the protein synthesizing functions of that subunit. This Marinobacter nauticus (strain ATCC 700491 / DSM 11845 / VT8) (Marinobacter aquaeolei) protein is Large ribosomal subunit protein bL20.